The sequence spans 261 residues: Small ribosomal subunit protein mS23 (261 aa).

The tract at residues 228 to 261 (EQRAAAFTGAPEIPSTEDSLGLEEGVEEKQPQQA) is disordered.

Belongs to the mitochondrion-specific ribosomal protein mS23 family. In terms of assembly, component of the mitochondrial small ribosomal subunit.

Its subcellular location is the mitochondrion. The chain is Small ribosomal subunit protein mS23 (rsm25) from Aspergillus oryzae (strain ATCC 42149 / RIB 40) (Yellow koji mold).